The following is a 228-amino-acid chain: Octanoyltransferase (228 aa).

In terms of domain architecture, BPL/LPL catalytic spans 40–225 (GEEAERVWLV…SFERVFDAAP (186 aa)). Residues 79–86 (RGGQWTYH), 156–158 (AIG), and 169–171 (GIA) contribute to the substrate site. The active-site Acyl-thioester intermediate is Cys-187.

The protein belongs to the LipB family.

It is found in the cytoplasm. The enzyme catalyses octanoyl-[ACP] + L-lysyl-[protein] = N(6)-octanoyl-L-lysyl-[protein] + holo-[ACP] + H(+). The protein operates within protein modification; protein lipoylation via endogenous pathway; protein N(6)-(lipoyl)lysine from octanoyl-[acyl-carrier-protein]: step 1/2. Its function is as follows. Catalyzes the transfer of endogenously produced octanoic acid from octanoyl-acyl-carrier-protein onto the lipoyl domains of lipoate-dependent enzymes. Lipoyl-ACP can also act as a substrate although octanoyl-ACP is likely to be the physiological substrate. This Acidiphilium cryptum (strain JF-5) protein is Octanoyltransferase.